A 173-amino-acid chain; its full sequence is Bifunctional protein PyrR (173 aa).

The PRPP-binding signature appears at 93-105; the sequence is IILVDDVLYTGRT.

This sequence belongs to the purine/pyrimidine phosphoribosyltransferase family. PyrR subfamily. As to quaternary structure, homodimer and homohexamer; in equilibrium.

The enzyme catalyses UMP + diphosphate = 5-phospho-alpha-D-ribose 1-diphosphate + uracil. Regulates transcriptional attenuation of the pyrimidine nucleotide (pyr) operon by binding in a uridine-dependent manner to specific sites on pyr mRNA. This disrupts an antiterminator hairpin in the RNA and favors formation of a downstream transcription terminator, leading to a reduced expression of downstream genes. Its function is as follows. Also displays a weak uracil phosphoribosyltransferase activity which is not physiologically significant. The protein is Bifunctional protein PyrR of Streptococcus equi subsp. zooepidemicus (strain H70).